Reading from the N-terminus, the 356-residue chain is UDP-N-acetylglucosamine--N-acetylmuramyl-(pentapeptide) pyrophosphoryl-undecaprenol N-acetylglucosamine transferase (356 aa).

Residues 12 to 14 (TGG), N124, R163, S188, I242, 261 to 266 (ALTVSE), and Q287 contribute to the UDP-N-acetyl-alpha-D-glucosamine site.

Belongs to the glycosyltransferase 28 family. MurG subfamily.

The protein localises to the cell inner membrane. It carries out the reaction di-trans,octa-cis-undecaprenyl diphospho-N-acetyl-alpha-D-muramoyl-L-alanyl-D-glutamyl-meso-2,6-diaminopimeloyl-D-alanyl-D-alanine + UDP-N-acetyl-alpha-D-glucosamine = di-trans,octa-cis-undecaprenyl diphospho-[N-acetyl-alpha-D-glucosaminyl-(1-&gt;4)]-N-acetyl-alpha-D-muramoyl-L-alanyl-D-glutamyl-meso-2,6-diaminopimeloyl-D-alanyl-D-alanine + UDP + H(+). The protein operates within cell wall biogenesis; peptidoglycan biosynthesis. Functionally, cell wall formation. Catalyzes the transfer of a GlcNAc subunit on undecaprenyl-pyrophosphoryl-MurNAc-pentapeptide (lipid intermediate I) to form undecaprenyl-pyrophosphoryl-MurNAc-(pentapeptide)GlcNAc (lipid intermediate II). The protein is UDP-N-acetylglucosamine--N-acetylmuramyl-(pentapeptide) pyrophosphoryl-undecaprenol N-acetylglucosamine transferase of Azotobacter vinelandii (strain DJ / ATCC BAA-1303).